A 968-amino-acid chain; its full sequence is Serine/threonine-protein kinase apg-1 (968 aa).

The Protein kinase domain occupies F24–V329. Residues I30–V38 and K53 contribute to the ATP site. D167 functions as the Proton acceptor in the catalytic mechanism. Disordered stretches follow at residues P334 to A500, M528 to S585, L884 to E906, and A939 to A968. Basic and acidic residues-rich tracts occupy residues L350 to D361, L371 to G380, and P417 to A431. Composition is skewed to polar residues over residues V441 to S452, M528 to S538, and A545 to A557.

It belongs to the protein kinase superfamily. Ser/Thr protein kinase family. APG1/unc-51/ULK1 subfamily. In terms of assembly, homodimer. Forms a ternary complex with ATG13 and ATG17.

The protein resides in the cytoplasm. The protein localises to the preautophagosomal structure membrane. It catalyses the reaction L-seryl-[protein] + ATP = O-phospho-L-seryl-[protein] + ADP + H(+). The catalysed reaction is L-threonyl-[protein] + ATP = O-phospho-L-threonyl-[protein] + ADP + H(+). Its function is as follows. Serine/threonine protein kinase involved in the cytoplasm to vacuole transport (Cvt) and found to be essential in autophagy, where it is required for the formation of autophagosomes. Involved in the clearance of protein aggregates which cannot be efficiently cleared by the proteasome. Required for selective autophagic degradation of the nucleus (nucleophagy) as well as for mitophagy which contributes to regulate mitochondrial quantity and quality by eliminating the mitochondria to a basal level to fulfill cellular energy requirements and preventing excess ROS production. Also involved in endoplasmic reticulum-specific autophagic process, in selective removal of ER-associated degradation (ERAD) substrates. Plays a key role in ATG9 and ATG23 cycling through the pre-autophagosomal structure and is necessary to promote ATG18 binding to ATG9 through phosphorylation of ATG9. Catalyzes phosphorylation of ATG4, decreasing the interaction between ATG4 and ATG8 and impairing deconjugation of PE-conjugated forms of ATG8. This Neurospora crassa (strain ATCC 24698 / 74-OR23-1A / CBS 708.71 / DSM 1257 / FGSC 987) protein is Serine/threonine-protein kinase apg-1.